A 293-amino-acid polypeptide reads, in one-letter code: tRNA pseudouridine synthase B (293 aa).

Aspartate 38 acts as the Nucleophile in catalysis.

Belongs to the pseudouridine synthase TruB family. Type 1 subfamily.

The catalysed reaction is uridine(55) in tRNA = pseudouridine(55) in tRNA. Its function is as follows. Responsible for synthesis of pseudouridine from uracil-55 in the psi GC loop of transfer RNAs. The polypeptide is tRNA pseudouridine synthase B (Microcystis aeruginosa (strain NIES-843 / IAM M-2473)).